Here is a 315-residue protein sequence, read N- to C-terminus: Voltage-dependent calcium channel gamma-3 subunit (315 aa).

Transmembrane regions (helical) follow at residues 8–28 (IQML…TIAV), 104–124 (SSVF…CVAA), 135–155 (ILSA…GIIV), and 181–201 (FGAF…HIYI). At serine 248 the chain carries Phosphoserine.

Belongs to the PMP-22/EMP/MP20 family. CACNG subfamily. In terms of assembly, the L-type calcium channel is composed of five subunits: alpha-1, alpha-2/delta, beta and gamma. Acts as an auxiliary subunit for AMPA-selective glutamate receptors (AMPARs). Found in a complex with GRIA1, GRIA2, GRIA3, GRIA4, CNIH2, CNIH3, CACNG2, CACNG4, CACNG5, CACNG7 and CACNG8. Interacts with AP4M1 and GRIA1; associates GRIA1 with the adaptor protein complex 4 (AP-4) to target GRIA1 to the somatodendritic compartment of neurons.

The protein localises to the membrane. In terms of biological role, regulates the trafficking to the somatodendritic compartment and gating properties of AMPA-selective glutamate receptors (AMPARs). Promotes their targeting to the cell membrane and synapses and modulates their gating properties by slowing their rates of activation, deactivation and desensitization. Does not show subunit-specific AMPA receptor regulation and regulates all AMPAR subunits. Thought to stabilize the calcium channel in an inactivated (closed) state. The chain is Voltage-dependent calcium channel gamma-3 subunit (CACNG3) from Homo sapiens (Human).